We begin with the raw amino-acid sequence, 113 residues long: Photosystem II reaction center Psb28 protein (113 aa).

Belongs to the Psb28 family. As to quaternary structure, part of the photosystem II complex.

Its subcellular location is the cellular thylakoid membrane. The sequence is that of Photosystem II reaction center Psb28 protein from Prochlorococcus marinus (strain NATL1A).